The following is a 426-amino-acid chain: DNA polymerase processivity factor component OPG148 (426 aa).

This sequence belongs to the orthopoxvirus OPG148 family. In terms of assembly, interacts with the DNA polymerase catalytic subunit OPG071. Interacts with UDG/OPG116. Component of the uracil-DNA glycosylase(UDG)-OPG148-polymerase complex; OPG148 and UDG form a heterodimeric processivity factor that associates with OPG071 to form the processive polymerase holoenzyme. Interacts with OPG117.

In terms of biological role, plays an essential role in viral DNA replication by acting as the polymerase processivity factor together with protein OPG116. Serves as a bridge which links the DNA polymerase OPG071 and the uracil DNA glycosylase. The sequence is that of DNA polymerase processivity factor component OPG148 (OPG148) from Cynomys gunnisoni (Gunnison's prairie dog).